The following is a 127-amino-acid chain: Large ribosomal subunit protein bL17 (127 aa).

This sequence belongs to the bacterial ribosomal protein bL17 family. Part of the 50S ribosomal subunit. Contacts protein L32.

The protein is Large ribosomal subunit protein bL17 of Haemophilus ducreyi (strain 35000HP / ATCC 700724).